A 150-amino-acid chain; its full sequence is Macrodomain Ter protein (150 aa).

This sequence belongs to the MatP family. As to quaternary structure, homodimer.

Its subcellular location is the cytoplasm. Its function is as follows. Required for spatial organization of the terminus region of the chromosome (Ter macrodomain) during the cell cycle. Prevents early segregation of duplicated Ter macrodomains during cell division. Binds specifically to matS, which is a 13 bp signature motif repeated within the Ter macrodomain. This is Macrodomain Ter protein from Salmonella agona (strain SL483).